The primary structure comprises 164 residues: Microfibrillar-associated protein 5 (164 aa).

The first 28 residues, 1–28, serve as a signal peptide directing secretion; that stretch reads MLFLGQKALLLVLAISIPSDWLPLGVSG. Residues 30 to 32 carry the Cell attachment site motif; sequence RGD. Asn70 is a glycosylation site (N-linked (GlcNAc...) asparagine).

The protein belongs to the MFAP family. Interacts with TGFB2. Interacts with BMP2. Interacts with FBN1 (via N-terminal domain) and FBN2. Post-translationally, forms intermolecular disulfide bonds either with other MAGP-2 molecules or with other components of the microfibrils.

Its subcellular location is the secreted. The protein resides in the extracellular space. It is found in the extracellular matrix. Its function is as follows. May play a role in hematopoiesis. In the cardiovascular system, could regulate growth factors or participate in cell signaling in maintaining large vessel integrity. Component of the elastin-associated microfibrils. This Mus musculus (Mouse) protein is Microfibrillar-associated protein 5 (Mfap5).